A 215-amino-acid polypeptide reads, in one-letter code: 3-demethoxyubiquinol 3-hydroxylase (215 aa).

Fe cation is bound by residues Glu64, Glu94, His97, Glu146, Glu178, and His181.

The protein belongs to the COQ7 family. Fe cation serves as cofactor.

It is found in the cell membrane. It carries out the reaction a 5-methoxy-2-methyl-3-(all-trans-polyprenyl)benzene-1,4-diol + AH2 + O2 = a 3-demethylubiquinol + A + H2O. It participates in cofactor biosynthesis; ubiquinone biosynthesis. Functionally, catalyzes the hydroxylation of 2-nonaprenyl-3-methyl-6-methoxy-1,4-benzoquinol during ubiquinone biosynthesis. The sequence is that of 3-demethoxyubiquinol 3-hydroxylase from Pseudomonas aeruginosa (strain LESB58).